The primary structure comprises 731 residues: DNA ligase (731 aa).

NAD(+)-binding positions include 47 to 51 (DAEYD), 96 to 97 (SI), and Glu-133. The N6-AMP-lysine intermediate role is filled by Lys-135. NAD(+)-binding residues include Arg-156, Glu-192, Lys-313, and Lys-337. The Zn(2+) site is built by Cys-462, Cys-465, Cys-480, and Cys-486. The 87-residue stretch at 645–731 (AATLPLAGMT…RGTPPNAGGA (87 aa)) folds into the BRCT domain.

It belongs to the NAD-dependent DNA ligase family. LigA subfamily. Requires Mg(2+) as cofactor. It depends on Mn(2+) as a cofactor.

It catalyses the reaction NAD(+) + (deoxyribonucleotide)n-3'-hydroxyl + 5'-phospho-(deoxyribonucleotide)m = (deoxyribonucleotide)n+m + AMP + beta-nicotinamide D-nucleotide.. In terms of biological role, DNA ligase that catalyzes the formation of phosphodiester linkages between 5'-phosphoryl and 3'-hydroxyl groups in double-stranded DNA using NAD as a coenzyme and as the energy source for the reaction. It is essential for DNA replication and repair of damaged DNA. This chain is DNA ligase, found in Acidovorax sp. (strain JS42).